The sequence spans 191 residues: Phosphoheptose isomerase (191 aa).

The 155-residue stretch at 37–191 (ITSSLKQGGK…LILLIEQSLL (155 aa)) folds into the SIS domain. 52–54 (NGG) contacts substrate. Positions 61 and 65 each coordinate Zn(2+). Substrate is bound by residues Glu-65, 93–94 (ND), 119–121 (STS), Ser-124, and Gln-172. Zn(2+) contacts are provided by Gln-172 and His-180.

This sequence belongs to the SIS family. GmhA subfamily. Requires Zn(2+) as cofactor.

Its subcellular location is the cytoplasm. The catalysed reaction is 2 D-sedoheptulose 7-phosphate = D-glycero-alpha-D-manno-heptose 7-phosphate + D-glycero-beta-D-manno-heptose 7-phosphate. Its pathway is carbohydrate biosynthesis; D-glycero-D-manno-heptose 7-phosphate biosynthesis; D-glycero-alpha-D-manno-heptose 7-phosphate and D-glycero-beta-D-manno-heptose 7-phosphate from sedoheptulose 7-phosphate: step 1/1. In terms of biological role, catalyzes the isomerization of sedoheptulose 7-phosphate in D-glycero-D-manno-heptose 7-phosphate. This chain is Phosphoheptose isomerase, found in Cytophaga hutchinsonii (strain ATCC 33406 / DSM 1761 / CIP 103989 / NBRC 15051 / NCIMB 9469 / D465).